Consider the following 441-residue polypeptide: MANKYFSSVLKSLLLLLHLVFLSKQHVDSASIVKFLPGFEGPLPFELETGYIGIGEEEEVQLFYYFIKSERNPKEDPLILWLTGGPGCSSISGLLFENGPLTMKLDVYNGTLPSLVSTTYSWTKTSSMIFLDQPVGTGFSYSRTQQFNKPSDSGEAKRIHEFLQKWLGKHQEFSSNPFYVAGDSYSGLVVPATVQEISKGNYECCNPPINLQGYVLGNPLTDYAIDSNSRIPFAHGMALISDELYESLKKTCKGEYTNVHPRNTQCLKFIEEFNKCTNRILQQLILDPLCETETPDCYIYRYLLTTYWANDATVREALQINKESIGEWVRCYRTIPYDNDIKSSMPYHVNNSISGYRSLIYSGDHDLEVPYLGTQAWIRSLNYSIIDDWRPWMIKNQIAGYTRTYANKMTFATIKGGGHTIEFKPEEASIMFQRWINGQPL.

An N-terminal signal peptide occupies residues 1-29 (MANKYFSSVLKSLLLLLHLVFLSKQHVDS). 3 disulfide bridges follow: Cys88–Cys331, Cys252–Cys266, and Cys290–Cys297. Asn109 is a glycosylation site (N-linked (GlcNAc...) asparagine). Ser184 is a catalytic residue. The N-linked (GlcNAc...) asparagine glycan is linked to Asn350. Asp366 is a catalytic residue. Asn382 carries N-linked (GlcNAc...) asparagine glycosylation. His419 is an active-site residue.

It belongs to the peptidase S10 family. Expressed in seedlings and roots.

It is found in the secreted. In terms of biological role, probable carboxypeptidase. This chain is Serine carboxypeptidase-like 2 (SCPL2), found in Arabidopsis thaliana (Mouse-ear cress).